A 380-amino-acid chain; its full sequence is Kappa-type opioid receptor (380 aa).

The Extracellular portion of the chain corresponds to 1–57 (MEPPVQIFRGEPGPTCSPSTCLPPNGSGWFPGWAEPDGNGSAGSEDVLLEPAHISPV). N-linked (GlcNAc...) asparagine glycosylation is found at Asn-25 and Asn-39. A helical transmembrane segment spans residues 58–85 (ILVIITAVYSVVFVVGLVGNSLVMFVII). Topologically, residues 86–95 (RYTKMKTATN) are cytoplasmic. Residues 96–119 (IYIFNLALADALVTTTMPFQSTVY) form a helical membrane-spanning segment. At 120–132 (LMNSWPFGDVLCK) the chain is on the extracellular side. Cys-131 and Cys-210 form a disulfide bridge. Residues 133-154 (VVISIDYYNMFTSIFTLTMMSV) form a helical membrane-spanning segment. The Cytoplasmic portion of the chain corresponds to 155–173 (DRYIAVCHPVKALDFRTPL). Residues 174–196 (KAKIINICIWILSSSVGISAIVL) form a helical membrane-spanning segment. At 197–222 (GGTKVREDMEVIECSLQFPDDDYSWW) the chain is on the extracellular side. The helical transmembrane segment at 223-247 (DLFMKVCVFVFAFVIPVLIIIVCYT) threads the bilayer. Over 248–274 (LMILRLKSVRLLSGSREKDRNLRRITR) the chain is Cytoplasmic. Residues 275–296 (LVLVVVAVFVVCWTPIHIFILV) traverse the membrane as a helical segment. The Extracellular portion of the chain corresponds to 297-311 (EALGSTAHSTAALSS). A helical transmembrane segment spans residues 312 to 333 (YYFCIALGYTNSSLNPILYAFL). The Cytoplasmic segment spans residues 334 to 380 (DENFKRCFRDFCFPIKMRMERQSTSRVRNTVQDPAYVREVDGVNKPV). Cys-345 carries S-palmitoyl cysteine lipidation.

The protein belongs to the G-protein coupled receptor 1 family. As to quaternary structure, interacts with NHERF1. Interacts with GABARAPL1.

The protein resides in the cell membrane. In terms of biological role, G-protein coupled opioid receptor that functions as a receptor for endogenous alpha-neoendorphins and dynorphins, but has low affinity for beta-endorphins. Also functions as a receptor for various synthetic opioids and for the psychoactive diterpene salvinorin A. Ligand binding causes a conformation change that triggers signaling via guanine nucleotide-binding proteins (G proteins) and modulates the activity of down-stream effectors, such as adenylate cyclase. Signaling leads to the inhibition of adenylate cyclase activity. Inhibits neurotransmitter release by reducing calcium ion currents and increasing potassium ion conductance. Plays a role in the perception of pain. Plays a role in mediating reduced physical activity upon treatment with synthetic opioids. Plays a role in the regulation of salivation in response to synthetic opioids. May play a role in arousal and regulation of autonomic and neuroendocrine functions. This is Kappa-type opioid receptor (OPRK1) from Bos taurus (Bovine).